The sequence spans 385 residues: 1-deoxy-D-xylulose 5-phosphate reductoisomerase (385 aa).

Residues Thr10, Gly11, Ile13, Gly36, and Asn38 each contribute to the NADPH site. 1-deoxy-D-xylulose 5-phosphate is bound at residue Lys123. Residue Glu124 coordinates NADPH. Asp148 provides a ligand contact to Mn(2+). The 1-deoxy-D-xylulose 5-phosphate site is built by Ser149, Glu150, Ser172, and His195. Glu150 provides a ligand contact to Mn(2+). Gly201 provides a ligand contact to NADPH. Positions 208, 213, 214, and 217 each coordinate 1-deoxy-D-xylulose 5-phosphate. Glu217 provides a ligand contact to Mn(2+).

The protein belongs to the DXR family. Requires Mg(2+) as cofactor. Mn(2+) serves as cofactor.

It carries out the reaction 2-C-methyl-D-erythritol 4-phosphate + NADP(+) = 1-deoxy-D-xylulose 5-phosphate + NADPH + H(+). Its pathway is isoprenoid biosynthesis; isopentenyl diphosphate biosynthesis via DXP pathway; isopentenyl diphosphate from 1-deoxy-D-xylulose 5-phosphate: step 1/6. Functionally, catalyzes the NADPH-dependent rearrangement and reduction of 1-deoxy-D-xylulose-5-phosphate (DXP) to 2-C-methyl-D-erythritol 4-phosphate (MEP). The protein is 1-deoxy-D-xylulose 5-phosphate reductoisomerase of Anaplasma phagocytophilum (strain HZ).